Consider the following 423-residue polypeptide: Core protease OPG082 (423 aa).

Active-site residues include histidine 241, aspartate 248, and cysteine 328.

Belongs to the peptidase C57 family.

The protein localises to the virion. Functionally, late protein responsible for processing most or all of the viral core and membrane proteins known to undergo morphogenesis-associated proteolysis. These proteolytic events are involved in the transformation of immature virions (IV) into mature virions (MV). Probably cleaves at least the OPG129, OPG136, OPG098, and OPG144 precursors preferentially at Ala-Gly-|-Ala motifs. Also seems to process Ala-Gly-|-Ser and Ala-Gly-|-Thr motifs. This is Core protease OPG082 (OPG083) from Homo sapiens (Human).